The following is a 695-amino-acid chain: Putative ATP-dependent DNA helicase R568 (695 aa).

One can recognise a UvrD-like helicase ATP-binding domain in the interval lysine 86–asparagine 499. Alanine 107 to threonine 114 lines the ATP pocket.

It belongs to the helicase family. UvrD subfamily.

The enzyme catalyses Couples ATP hydrolysis with the unwinding of duplex DNA by translocating in the 3'-5' direction.. It catalyses the reaction ATP + H2O = ADP + phosphate + H(+). Its function is as follows. ATP-dependent DNA helicase. This is Putative ATP-dependent DNA helicase R568 from Acanthamoeba polyphaga mimivirus (APMV).